Consider the following 706-residue polypeptide: Polyribonucleotide nucleotidyltransferase (706 aa).

Mg(2+) is bound by residues Asp-483 and Asp-489. The region spanning 550–609 (PRITTIWVKTDKIRDVIGTGGKNIRNITETTGVTVDIEDTGRINIASTSKEACDLAIQMI) is the KH domain. The S1 motif domain maps to 619-687 (GKLYMGIVKK…KNGKVKLSRK (69 aa)).

It belongs to the polyribonucleotide nucleotidyltransferase family. Requires Mg(2+) as cofactor.

Its subcellular location is the cytoplasm. It catalyses the reaction RNA(n+1) + phosphate = RNA(n) + a ribonucleoside 5'-diphosphate. Functionally, involved in mRNA degradation. Catalyzes the phosphorolysis of single-stranded polyribonucleotides processively in the 3'- to 5'-direction. The protein is Polyribonucleotide nucleotidyltransferase of Pelobacter propionicus (strain DSM 2379 / NBRC 103807 / OttBd1).